The primary structure comprises 503 residues: Long-chain-aldehyde dehydrogenase (503 aa).

218 to 224 contributes to the NAD(+) binding site; that stretch reads GYGAEVG. Residues glutamate 262 and cysteine 301 contribute to the active site.

This sequence belongs to the aldehyde dehydrogenase family. Homotetramer.

It catalyses the reaction a long-chain fatty aldehyde + NAD(+) + H2O = a long-chain fatty acid + NADH + 2 H(+). With respect to regulation, completely inhibited by p-chloromercuribenzoate and N-ethylmaleimide. Strongly inhibited by iodoacetate. Inhibited by Pb(2+), Fe(3+), Ag(+) and Hg(2+) and partially inhibited by several other metal ions Mn(2+), Zn(2+) and Cu(2+). Its function is as follows. Aldehyde dehydrogenase that shows activity toward n-alkanals (C(4) to C(14)), with a preference for longer carbon chains. The best substrate is tetradecanal. This is Long-chain-aldehyde dehydrogenase (ald1) from Acinetobacter sp.